A 441-amino-acid polypeptide reads, in one-letter code: Thymidine phosphorylase (441 aa).

This sequence belongs to the thymidine/pyrimidine-nucleoside phosphorylase family. In terms of assembly, homodimer.

It catalyses the reaction thymidine + phosphate = 2-deoxy-alpha-D-ribose 1-phosphate + thymine. The protein operates within pyrimidine metabolism; dTMP biosynthesis via salvage pathway; dTMP from thymine: step 1/2. Its function is as follows. The enzymes which catalyze the reversible phosphorolysis of pyrimidine nucleosides are involved in the degradation of these compounds and in their utilization as carbon and energy sources, or in the rescue of pyrimidine bases for nucleotide synthesis. In Chromobacterium violaceum (strain ATCC 12472 / DSM 30191 / JCM 1249 / CCUG 213 / NBRC 12614 / NCIMB 9131 / NCTC 9757 / MK), this protein is Thymidine phosphorylase.